The following is a 340-amino-acid chain: Methionyl-tRNA formyltransferase (340 aa).

110-113 provides a ligand contact to (6S)-5,6,7,8-tetrahydrofolate; sequence SLLP.

Belongs to the Fmt family.

The enzyme catalyses L-methionyl-tRNA(fMet) + (6R)-10-formyltetrahydrofolate = N-formyl-L-methionyl-tRNA(fMet) + (6S)-5,6,7,8-tetrahydrofolate + H(+). Attaches a formyl group to the free amino group of methionyl-tRNA(fMet). The formyl group appears to play a dual role in the initiator identity of N-formylmethionyl-tRNA by promoting its recognition by IF2 and preventing the misappropriation of this tRNA by the elongation apparatus. The sequence is that of Methionyl-tRNA formyltransferase from Synechococcus sp. (strain WH7803).